A 202-amino-acid chain; its full sequence is MRFYLTKLFAAAGALAWTTGLSTANAVTTPVSPLSRSSDHHQSDDSTQRRLRTLNGADEERMSPLTMTRLRAALAFELELVDFDSLAQNQFLARVREMLGIKVTGSTTAGLPKMIRRFGVKNSAKNVAKRVQDPAKQADLIAGLLIYPVKQRDLLGDELLRKWPYLTVSAIKKRVIAEKNRKVHKKPRPFAAHVHAPTIAAY.

Residues 1-16 form the signal peptide; sequence MRFYLTKLFAAAGALA. The interval 29 to 58 is disordered; it reads TPVSPLSRSSDHHQSDDSTQRRLRTLNGAD. Residues 37 to 48 are compositionally biased toward basic and acidic residues; sequence SSDHHQSDDSTQ. The RxLR-dEER motif lies at 49–61; that stretch reads RRLRTLNGADEER.

The protein belongs to the RxLR effector family.

It localises to the secreted. The protein resides in the host nucleus. Its function is as follows. Secreted effector that completely suppresses the host cell death induced by cell death-inducing proteins. This is Secreted RxLR effector protein 93 from Plasmopara viticola (Downy mildew of grapevine).